The sequence spans 42 residues: YITCLFRGARCRVYSGRSCCFGYYCRRDFPGSIFGTCSRRNF.

3 disulfides stabilise this stretch: C4-C20, C11-C25, and C19-C37.

As to expression, granular hemocytes, small secretory granules.

Its subcellular location is the secreted. Its function is as follows. Exhibits stronger antimicrobial activity against the Gram-positive bacteria (S.aureus (IC(50) is 7.4 ug/ml)) and fungi (C.albicans (IC(50) is 3.0 ug/ml) and P.pastoris (IC(50) is 0.1 ug/ml)) than Gram-negative bacteria (E.coli no inhibition at 100 ug/ml). Binds to chitin (4.3 uM are required to obtain 50% of binding). Does not cause hemolysis on sheep erythrocytes. Has no blocking activity on the P-type calcium channel. The polypeptide is Tachystatin-B2 (Tachypleus tridentatus (Japanese horseshoe crab)).